Here is a 378-residue protein sequence, read N- to C-terminus: D-alanine--D-alanine ligase (378 aa).

Positions 141-347 (KKLLTLNGIR…YSELIDQLIQ (207 aa)) constitute an ATP-grasp domain. Residue 171 to 226 (AEELGETLFVKPARQGSSVGIHKVRNEEEYNAALEDGFKYDYKILVEEAIKNPREV) participates in ATP binding. Mg(2+)-binding residues include Asp-301, Glu-314, and Asn-316.

The protein belongs to the D-alanine--D-alanine ligase family. Mg(2+) is required as a cofactor. Mn(2+) serves as cofactor.

The protein resides in the cytoplasm. It catalyses the reaction 2 D-alanine + ATP = D-alanyl-D-alanine + ADP + phosphate + H(+). It participates in cell wall biogenesis; peptidoglycan biosynthesis. Functionally, cell wall formation. The polypeptide is D-alanine--D-alanine ligase (Ligilactobacillus salivarius (strain UCC118) (Lactobacillus salivarius)).